The sequence spans 313 residues: Porphobilinogen deaminase (313 aa).

Cysteine 241 is modified (S-(dipyrrolylmethanemethyl)cysteine).

It belongs to the HMBS family. In terms of assembly, monomer. Dipyrromethane serves as cofactor.

It catalyses the reaction 4 porphobilinogen + H2O = hydroxymethylbilane + 4 NH4(+). It participates in porphyrin-containing compound metabolism; protoporphyrin-IX biosynthesis; coproporphyrinogen-III from 5-aminolevulinate: step 2/4. The protein operates within porphyrin-containing compound metabolism; chlorophyll biosynthesis. Functionally, tetrapolymerization of the monopyrrole PBG into the hydroxymethylbilane pre-uroporphyrinogen in several discrete steps. This chain is Porphobilinogen deaminase, found in Chlorobium limicola (strain DSM 245 / NBRC 103803 / 6330).